Reading from the N-terminus, the 410-residue chain is MNNRYPVMKKGLIVLVVIAVAAGGYYWWKHPAQPSSDGDLSGQSAHGKRGNGAHKPLAPVQAASAVTESVPQYLNGLGTVTAANTVTVRSRVDGNLMSIHFTEGQQVKAGQLLAEIDPRPYQVALMQAQGQLARDQATLANARRDLARYQKLAKTSLVSQQDLDTQNALVSETLGTIKADEGSVASAQLNLTYSRITSPIDGRVGLKQVDIGNYITSGDTNGLVVITQTHPVDVVFSVAENNISQIMQAQKSGEPLLVEAWDRSNQHLITRGKLLSLDNQIDATTGTIKIKARFDNQDDLLFPNQFVNARLKVNTLQDAVVIPAAALQMGNEGHFVWVINNEDKVSKKSVTAGLQDSQKVVISAGLNAGDRVVTDGLDRLTEGAKVEVVAAQSRATKETRASLPSKGESE.

A signal peptide spans 1–21; the sequence is MNNRYPVMKKGLIVLVVIAVA. The disordered stretch occupies residues 36 to 56; that stretch reads SDGDLSGQSAHGKRGNGAHKP.

Belongs to the membrane fusion protein (MFP) (TC 8.A.1) family. Part of a tripartite efflux system composed of MdtA, MdtB and MdtC.

It localises to the cell inner membrane. The sequence is that of Multidrug resistance protein MdtA from Pantoea ananatis (strain AJ13355).